Here is a 343-residue protein sequence, read N- to C-terminus: Phosphate acyltransferase (343 aa).

Belongs to the PlsX family. In terms of assembly, homodimer. Probably interacts with PlsY.

The protein localises to the cytoplasm. It catalyses the reaction a fatty acyl-[ACP] + phosphate = an acyl phosphate + holo-[ACP]. It participates in lipid metabolism; phospholipid metabolism. In terms of biological role, catalyzes the reversible formation of acyl-phosphate (acyl-PO(4)) from acyl-[acyl-carrier-protein] (acyl-ACP). This enzyme utilizes acyl-ACP as fatty acyl donor, but not acyl-CoA. The protein is Phosphate acyltransferase of Coxiella burnetii (strain RSA 331 / Henzerling II).